A 330-amino-acid polypeptide reads, in one-letter code: Glycerol-3-phosphate dehydrogenase [NAD(P)+] (330 aa).

NADPH-binding residues include Ser14, Phe15, Arg35, and Lys109. Lys109 and Gly137 together coordinate sn-glycerol 3-phosphate. Ala141 contacts NADPH. Sn-glycerol 3-phosphate contacts are provided by Lys192, Asp248, Ser258, Arg259, and Asn260. The active-site Proton acceptor is Lys192. Residue Arg259 participates in NADPH binding. Leu283 and Glu285 together coordinate NADPH.

This sequence belongs to the NAD-dependent glycerol-3-phosphate dehydrogenase family.

Its subcellular location is the cytoplasm. The enzyme catalyses sn-glycerol 3-phosphate + NAD(+) = dihydroxyacetone phosphate + NADH + H(+). It carries out the reaction sn-glycerol 3-phosphate + NADP(+) = dihydroxyacetone phosphate + NADPH + H(+). It participates in membrane lipid metabolism; glycerophospholipid metabolism. Its function is as follows. Catalyzes the reduction of the glycolytic intermediate dihydroxyacetone phosphate (DHAP) to sn-glycerol 3-phosphate (G3P), the key precursor for phospholipid synthesis. The chain is Glycerol-3-phosphate dehydrogenase [NAD(P)+] from Rickettsia massiliae (strain Mtu5).